The following is a 486-amino-acid chain: Glutamyl-tRNA(Gln) amidotransferase subunit A (486 aa).

Catalysis depends on charge relay system residues Lys-79 and Ser-154. Ser-178 functions as the Acyl-ester intermediate in the catalytic mechanism.

It belongs to the amidase family. GatA subfamily. Heterotrimer of A, B and C subunits.

The enzyme catalyses L-glutamyl-tRNA(Gln) + L-glutamine + ATP + H2O = L-glutaminyl-tRNA(Gln) + L-glutamate + ADP + phosphate + H(+). Its function is as follows. Allows the formation of correctly charged Gln-tRNA(Gln) through the transamidation of misacylated Glu-tRNA(Gln) in organisms which lack glutaminyl-tRNA synthetase. The reaction takes place in the presence of glutamine and ATP through an activated gamma-phospho-Glu-tRNA(Gln). In Dehalococcoides mccartyi (strain CBDB1), this protein is Glutamyl-tRNA(Gln) amidotransferase subunit A.